A 155-amino-acid polypeptide reads, in one-letter code: Endoribonuclease YbeY (155 aa).

The Zn(2+) site is built by histidine 114, histidine 118, and histidine 124.

It belongs to the endoribonuclease YbeY family. Zn(2+) serves as cofactor.

The protein localises to the cytoplasm. In terms of biological role, single strand-specific metallo-endoribonuclease involved in late-stage 70S ribosome quality control and in maturation of the 3' terminus of the 16S rRNA. In Citrobacter koseri (strain ATCC BAA-895 / CDC 4225-83 / SGSC4696), this protein is Endoribonuclease YbeY.